A 465-amino-acid chain; its full sequence is 3-isopropylmalate dehydratase large subunit (465 aa).

Residues Cys-346, Cys-406, and Cys-409 each coordinate [4Fe-4S] cluster.

Belongs to the aconitase/IPM isomerase family. LeuC type 1 subfamily. As to quaternary structure, heterodimer of LeuC and LeuD. It depends on [4Fe-4S] cluster as a cofactor.

It carries out the reaction (2R,3S)-3-isopropylmalate = (2S)-2-isopropylmalate. Its pathway is amino-acid biosynthesis; L-leucine biosynthesis; L-leucine from 3-methyl-2-oxobutanoate: step 2/4. Catalyzes the isomerization between 2-isopropylmalate and 3-isopropylmalate, via the formation of 2-isopropylmaleate. The sequence is that of 3-isopropylmalate dehydratase large subunit from Leptospira interrogans serogroup Icterohaemorrhagiae serovar copenhageni (strain Fiocruz L1-130).